The following is a 79-amino-acid chain: D-alanyl carrier protein (79 aa).

The Carrier domain occupies 2 to 79 (AEFKEQVLDI…MVIKKLEEIR (78 aa)). Residue serine 37 is modified to O-(pantetheine 4'-phosphoryl)serine.

The protein belongs to the DltC family. 4'-phosphopantetheine is transferred from CoA to a specific serine of apo-DCP.

The protein localises to the cytoplasm. It participates in cell wall biogenesis; lipoteichoic acid biosynthesis. Carrier protein involved in the D-alanylation of lipoteichoic acid (LTA). The loading of thioester-linked D-alanine onto DltC is catalyzed by D-alanine--D-alanyl carrier protein ligase DltA. The DltC-carried D-alanyl group is further transferred to cell membrane phosphatidylglycerol (PG) by forming an ester bond, probably catalyzed by DltD. D-alanylation of LTA plays an important role in modulating the properties of the cell wall in Gram-positive bacteria, influencing the net charge of the cell wall. In Bacillus anthracis (strain CDC 684 / NRRL 3495), this protein is D-alanyl carrier protein.